Consider the following 463-residue polypeptide: Glutamate--tRNA ligase (463 aa).

A 'HIGH' region motif is present at residues 8–18; the sequence is PSPTGYLHIGG. The 'KMSKS' region signature appears at 236 to 240; it reads RLSKR. Residue Lys239 coordinates ATP.

Belongs to the class-I aminoacyl-tRNA synthetase family. Glutamate--tRNA ligase type 1 subfamily. As to quaternary structure, monomer.

Its subcellular location is the cytoplasm. It carries out the reaction tRNA(Glu) + L-glutamate + ATP = L-glutamyl-tRNA(Glu) + AMP + diphosphate. Catalyzes the attachment of glutamate to tRNA(Glu) in a two-step reaction: glutamate is first activated by ATP to form Glu-AMP and then transferred to the acceptor end of tRNA(Glu). The protein is Glutamate--tRNA ligase of Nitrosomonas europaea (strain ATCC 19718 / CIP 103999 / KCTC 2705 / NBRC 14298).